A 115-amino-acid chain; its full sequence is Beta-2-microglobulin (115 aa).

The signal sequence occupies residues 1–16 (MKIALVLLSLLALTLA). The Ig-like C1-type domain occupies 22–113 (PPVVKVYTAE…GNPSKKYRLD (92 aa)).

It belongs to the beta-2-microglobulin family. As to quaternary structure, heterodimer of an alpha chain and a beta chain. Beta-2-microglobulin is the beta-chain of major histocompatibility complex class I molecules.

The protein resides in the secreted. Functionally, component of the class I major histocompatibility complex (MHC). Involved in the presentation of peptide antigens to the immune system. This chain is Beta-2-microglobulin (b2m), found in Xenopus laevis (African clawed frog).